The sequence spans 491 residues: Cytochrome P450 2F5 (491 aa).

Residue Cys-436 coordinates heme.

This sequence belongs to the cytochrome P450 family. Heme serves as cofactor.

Its subcellular location is the endoplasmic reticulum membrane. The protein localises to the microsome membrane. The catalysed reaction is an organic molecule + reduced [NADPH--hemoprotein reductase] + O2 = an alcohol + oxidized [NADPH--hemoprotein reductase] + H2O + H(+). In terms of biological role, cytochromes P450 are a group of heme-thiolate monooxygenases. In liver microsomes, this enzyme is involved in an NADPH-dependent electron transport pathway. It oxidizes a variety of structurally unrelated compounds, including steroids, fatty acids, and xenobiotics. This Gorilla gorilla gorilla (Western lowland gorilla) protein is Cytochrome P450 2F5 (CYP2F5).